The following is a 151-amino-acid chain: Ribosome maturation factor RimP (151 aa).

It belongs to the RimP family.

It is found in the cytoplasm. In terms of biological role, required for maturation of 30S ribosomal subunits. The sequence is that of Ribosome maturation factor RimP from Shewanella woodyi (strain ATCC 51908 / MS32).